Here is a 239-residue protein sequence, read N- to C-terminus: Adapter protein MecA (239 aa).

Residues 118–128 show a composition bias toward basic and acidic residues; it reads EQRTKEKEAQG. Residues 118–137 are disordered; it reads EQRTKEKEAQGSKRQKSSAR.

This sequence belongs to the MecA family. In terms of assembly, homodimer.

Functionally, enables the recognition and targeting of unfolded and aggregated proteins to the ClpC protease or to other proteins involved in proteolysis. This chain is Adapter protein MecA, found in Staphylococcus aureus (strain USA300).